The chain runs to 116 residues: Nascent polypeptide-associated complex protein (116 aa).

Positions 6–70 (PKQMKDLERM…AREESKQQQK (65 aa)) constitute an NAC-A/B domain.

The protein belongs to the NAC-alpha family. In terms of assembly, homodimer. Interacts with the ribosome. Binds ribosomal RNA.

Contacts the emerging nascent chain on the ribosome. The polypeptide is Nascent polypeptide-associated complex protein (Sulfolobus acidocaldarius (strain ATCC 33909 / DSM 639 / JCM 8929 / NBRC 15157 / NCIMB 11770)).